The chain runs to 171 residues: Adenine phosphoribosyltransferase (171 aa).

It belongs to the purine/pyrimidine phosphoribosyltransferase family. Homodimer.

It is found in the cytoplasm. The enzyme catalyses AMP + diphosphate = 5-phospho-alpha-D-ribose 1-diphosphate + adenine. The protein operates within purine metabolism; AMP biosynthesis via salvage pathway; AMP from adenine: step 1/1. Catalyzes a salvage reaction resulting in the formation of AMP, that is energically less costly than de novo synthesis. The sequence is that of Adenine phosphoribosyltransferase from Rhodospirillum centenum (strain ATCC 51521 / SW).